The chain runs to 542 residues: Probable quinate permease (542 aa).

The Cytoplasmic segment spans residues 1–22; sequence MSILALVEDRPTPKEVYNWRIY. The chain crosses the membrane as a helical span at residues 23–43; sequence LLAAVASFTSCMIGYDSAFIG. At 44-66 the chain is on the extracellular side; it reads TTLALSSFREEFGFNTMSKTAVN. A helical transmembrane segment spans residues 67–87; sequence LVSANIVSCYQAGAFFGAFLA. The Cytoplasmic portion of the chain corresponds to 88–97; the sequence is YPVGHFWGRK. A helical membrane pass occupies residues 98 to 118; the sequence is WGLLFSGAIFTLGAGLMLGAD. The Extracellular segment spans residues 119 to 130; it reads GDRGLGLLYGGR. Residues 131 to 151 form a helical membrane-spanning segment; sequence VLAGLGVGAGSNITPIYISEM. Residues 152–159 are Cytoplasmic-facing; it reads APPSIRGR. The helical transmembrane segment at 160–180 threads the bilayer; sequence LVGVYELGWQIGGLVGFWINY. Residues 181–193 are Extracellular-facing; sequence GVSETLAPSHKQW. The chain crosses the membrane as a helical span at residues 194–214; that stretch reads IIPFAVQLIPSGLLLIGAVFL. Topologically, residues 215–285 are cytoplasmic; it reads KESPRWLFSR…AGTNKKVMYR (71 aa). A helical transmembrane segment spans residues 286–306; that stretch reads LFLGSMLFFWQNGSGINAINY. Residues 307–325 are Extracellular-facing; it reads YSPTVFKSIGLQGANTSMF. A helical transmembrane segment spans residues 326–346; the sequence is STGIFGVVKTVVTFVWLLYLI. Residues 347-352 are Cytoplasmic-facing; it reads DRLGRR. The helical transmembrane segment at 353–373 threads the bilayer; the sequence is LLLLIGAAGASVCLFIVGAYI. At 374-387 the chain is on the extracellular side; it reads KIADPASNPTQEMT. The chain crosses the membrane as a helical span at residues 388–408; it reads GGGIAAMFFFYLYTVFYTPSW. The Cytoplasmic segment spans residues 409 to 456; it reads NGTPWVMNSEMFEPNMRSLAQACAAASNWFWNFLISRFTPQMFAKMEY. The helical transmembrane segment at 457-477 threads the bilayer; that stretch reads GVWFFFASLMVLSIVFVFFLL. Residues 478-542 lie on the Extracellular side of the membrane; the sequence is PETKGIPLES…EHLSEDLPKV (65 aa). The tract at residues 519–542 is disordered; it reads IEESGYSKTGDQQVEHLSEDLPKV. A compositionally biased stretch (basic and acidic residues) spans 531–542; sequence QVEHLSEDLPKV.

This sequence belongs to the major facilitator superfamily. Sugar transporter (TC 2.A.1.1) family. As to quaternary structure, interacts with creB. In terms of processing, ubiquitinated. Deubiquitinated by creB, probably to control its activity or amount.

It localises to the cell membrane. Integral membrane transporter that imports quinic acid to be catabolized as a carbon source. This is Probable quinate permease (qutD) from Neosartorya fischeri (strain ATCC 1020 / DSM 3700 / CBS 544.65 / FGSC A1164 / JCM 1740 / NRRL 181 / WB 181) (Aspergillus fischerianus).